Here is a 114-residue protein sequence, read N- to C-terminus: UPF0342 protein SSP0954 (114 aa).

The protein belongs to the UPF0342 family.

The sequence is that of UPF0342 protein SSP0954 from Staphylococcus saprophyticus subsp. saprophyticus (strain ATCC 15305 / DSM 20229 / NCIMB 8711 / NCTC 7292 / S-41).